A 70-amino-acid polypeptide reads, in one-letter code: Conotoxin Lt11.2 (70 aa).

The first 26 residues, 1 to 26 (MMFRLTSVSCFLLFIVFLNLVVLTNA), serve as a signal peptide directing secretion. Cystine bridges form between cysteine 27-cysteine 41, cysteine 34-cysteine 46, cysteine 40-cysteine 50, and cysteine 45-cysteine 54. Proline 57 carries the post-translational modification Proline amide. Residues 61–70 (EKLQEFFRQR) constitute a propeptide that is removed on maturation.

It belongs to the conotoxin I2 superfamily. As to expression, expressed by the venom duct.

Its subcellular location is the secreted. The polypeptide is Conotoxin Lt11.2 (Conus litteratus (Lettered cone)).